Reading from the N-terminus, the 354-residue chain is Glycerol-3-phosphate dehydrogenase [NAD(+)], glycosomal (354 aa).

NAD(+) contacts are provided by residues 15-20, Phe90, Lys118, and Ala150; that span reads GSGAFG. A substrate-binding site is contributed by Lys118. The active-site Proton acceptor is Lys203. Residues Arg267 and Glu293 each contribute to the NAD(+) site. 267–268 lines the substrate pocket; that stretch reads RN. Residues 352 to 354 carry the Microbody targeting signal motif; the sequence is SKM.

This sequence belongs to the NAD-dependent glycerol-3-phosphate dehydrogenase family.

The protein localises to the glycosome. The enzyme catalyses sn-glycerol 3-phosphate + NAD(+) = dihydroxyacetone phosphate + NADH + H(+). The sequence is that of Glycerol-3-phosphate dehydrogenase [NAD(+)], glycosomal (GPD) from Trypanosoma brucei rhodesiense.